A 187-amino-acid polypeptide reads, in one-letter code: GTP cyclohydrolase 1 (187 aa).

Residues cysteine 78, histidine 81, and cysteine 149 each contribute to the Zn(2+) site.

This sequence belongs to the GTP cyclohydrolase I family. In terms of assembly, toroid-shaped homodecamer, composed of two pentamers of five dimers.

The catalysed reaction is GTP + H2O = 7,8-dihydroneopterin 3'-triphosphate + formate + H(+). Its pathway is cofactor biosynthesis; 7,8-dihydroneopterin triphosphate biosynthesis; 7,8-dihydroneopterin triphosphate from GTP: step 1/1. This chain is GTP cyclohydrolase 1, found in Wolinella succinogenes (strain ATCC 29543 / DSM 1740 / CCUG 13145 / JCM 31913 / LMG 7466 / NCTC 11488 / FDC 602W) (Vibrio succinogenes).